A 146-amino-acid chain; its full sequence is NADPH-dependent 7-cyano-7-deazaguanine reductase (146 aa).

Cys-48 serves as the catalytic Thioimide intermediate. The Proton donor role is filled by Asp-55. Substrate contacts are provided by residues 70 to 72 (VES) and 89 to 90 (HE).

This sequence belongs to the GTP cyclohydrolase I family. QueF type 1 subfamily.

The protein resides in the cytoplasm. The enzyme catalyses 7-aminomethyl-7-carbaguanine + 2 NADP(+) = 7-cyano-7-deazaguanine + 2 NADPH + 3 H(+). The protein operates within tRNA modification; tRNA-queuosine biosynthesis. Its function is as follows. Catalyzes the NADPH-dependent reduction of 7-cyano-7-deazaguanine (preQ0) to 7-aminomethyl-7-deazaguanine (preQ1). The chain is NADPH-dependent 7-cyano-7-deazaguanine reductase from Helicobacter pylori (strain Shi470).